Consider the following 396-residue polypeptide: Elongation factor Tu (396 aa).

The tr-type G domain maps to 11–205 (KPHVNIGTIG…TVDEYIPTPE (195 aa)). The G1 stretch occupies residues 20 to 27 (GHVDHGKT). Residue 20–27 (GHVDHGKT) coordinates GTP. Threonine 27 lines the Mg(2+) pocket. Residues 61–65 (GITIN) form a G2 region. The G3 stretch occupies residues 82–85 (DAPG). GTP is bound by residues 82 to 86 (DAPGH) and 137 to 140 (NKCD). Residues 137–140 (NKCD) form a G4 region. The interval 175-177 (SAL) is G5.

Belongs to the TRAFAC class translation factor GTPase superfamily. Classic translation factor GTPase family. EF-Tu/EF-1A subfamily. As to quaternary structure, monomer.

Its subcellular location is the cytoplasm. The enzyme catalyses GTP + H2O = GDP + phosphate + H(+). In terms of biological role, GTP hydrolase that promotes the GTP-dependent binding of aminoacyl-tRNA to the A-site of ribosomes during protein biosynthesis. The sequence is that of Elongation factor Tu from Lactobacillus helveticus (strain DPC 4571).